Reading from the N-terminus, the 103-residue chain is UPF0473 protein LBA0420 (103 aa).

This sequence belongs to the UPF0473 family.

The polypeptide is UPF0473 protein LBA0420 (Lactobacillus acidophilus (strain ATCC 700396 / NCK56 / N2 / NCFM)).